The following is an 81-amino-acid chain: Acyl carrier protein (81 aa).

Residues Ala2–Gln80 enclose the Carrier domain. At Ser40 the chain carries O-(pantetheine 4'-phosphoryl)serine.

This sequence belongs to the acyl carrier protein (ACP) family. Post-translationally, 4'-phosphopantetheine is transferred from CoA to a specific serine of apo-ACP by AcpS. This modification is essential for activity because fatty acids are bound in thioester linkage to the sulfhydryl of the prosthetic group.

The protein resides in the cytoplasm. Its pathway is lipid metabolism; fatty acid biosynthesis. In terms of biological role, carrier of the growing fatty acid chain in fatty acid biosynthesis. The sequence is that of Acyl carrier protein from Micrococcus luteus (strain ATCC 4698 / DSM 20030 / JCM 1464 / CCM 169 / CCUG 5858 / IAM 1056 / NBRC 3333 / NCIMB 9278 / NCTC 2665 / VKM Ac-2230) (Micrococcus lysodeikticus).